The chain runs to 274 residues: Acetyl-coenzyme A carboxylase carboxyl transferase subunit beta (274 aa).

The CoA carboxyltransferase N-terminal domain maps to 16–274 (LWTKCEECKN…LLNLLFYKNA (259 aa)). Residues cysteine 20, cysteine 23, cysteine 39, and cysteine 42 each contribute to the Zn(2+) site. The C4-type zinc finger occupies 20-42 (CEECKNILLAQELETNFYVCPKC).

It belongs to the AccD/PCCB family. In terms of assembly, acetyl-CoA carboxylase is a heterohexamer composed of biotin carboxyl carrier protein (AccB), biotin carboxylase (AccC) and two subunits each of ACCase subunit alpha (AccA) and ACCase subunit beta (AccD). Zn(2+) serves as cofactor.

It is found in the cytoplasm. It catalyses the reaction N(6)-carboxybiotinyl-L-lysyl-[protein] + acetyl-CoA = N(6)-biotinyl-L-lysyl-[protein] + malonyl-CoA. Its pathway is lipid metabolism; malonyl-CoA biosynthesis; malonyl-CoA from acetyl-CoA: step 1/1. Its function is as follows. Component of the acetyl coenzyme A carboxylase (ACC) complex. Biotin carboxylase (BC) catalyzes the carboxylation of biotin on its carrier protein (BCCP) and then the CO(2) group is transferred by the transcarboxylase to acetyl-CoA to form malonyl-CoA. The chain is Acetyl-coenzyme A carboxylase carboxyl transferase subunit beta from Hydrogenobaculum sp. (strain Y04AAS1).